A 408-amino-acid polypeptide reads, in one-letter code: Phosphoenolpyruvate/phosphate translocator 1, chloroplastic (408 aa).

The transit peptide at 1–85 (MQSSAVFSLS…SLDTNRFRTA (85 aa)) directs the protein to the chloroplast. At Ala-86 the chain carries N-acetylalanine. The next 8 helical transmembrane spans lie at 105 to 125 (VLELGLLFAMWYLFNIYFNIY), 137 to 157 (MTVTLVQFAVGSVLITIMWVL), 165 to 185 (ISGAQLAAILPLAVVHTLGNL), 198 to 218 (FTHTIKAMEPFFSVLLSAMFL), 222 to 242 (PTPWVLGAIVPIVGGVALASI), 283 to 303 (ITLFSIITLMSLVLMAPVTFF), 324 to 346 (IYTKSLIAALCFHAYQQVSYMIL), and 377 to 396 (VSPVNAFGTGIALAGVFLYS). An EamA domain is found at 124 to 241 (IYNKQVLKAL…PIVGGVALAS (118 aa)).

The protein belongs to the TPT transporter family. PPT (TC 2.A.7.9) subfamily. In terms of tissue distribution, expressed in root columella, lateral root cap and root vasculature tissue. In leaves, highly expressed in xylem parenchyma cells. In flowers, expressed in sepals, petals, filaments of the stamens, anthers and stigma.

It localises to the plastid. It is found in the chloroplast membrane. In terms of biological role, phosphoenolpyruvate/phosphate translocator that transports phosphoenolpyruvate (PEP), 2-phosphoglycerate, 3-phosphoglycerate and dihydroxyacetone phosphate. Imports PEP to the chloroplast stroma as one substrate of the shikimate pathway, from which aromatic amino acids and a variety of secondary products derive. Required for correct leaf mesophyll cell development and expression of chlorophyll a/b binding protein 3 (CAB3). This is Phosphoenolpyruvate/phosphate translocator 1, chloroplastic (PPT1) from Arabidopsis thaliana (Mouse-ear cress).